Here is a 167-residue protein sequence, read N- to C-terminus: Low molecular mass early light-inducible protein HV60, chloroplastic (167 aa).

Residues 1-33 (MATMMAMSSFAGAAVLPRGSARSLPALGRRTLV) constitute a chloroplast transit peptide. A run of 2 helical transmembrane segments spans residues 101-121 (GQAW…VPLL) and 145-165 (FAMI…TPFI).

Belongs to the ELIP/psbS family.

It localises to the plastid. The protein resides in the chloroplast membrane. In terms of biological role, probably involved in the integration of pigments into the mature pigment-protein complexes. The polypeptide is Low molecular mass early light-inducible protein HV60, chloroplastic (Hordeum vulgare (Barley)).